We begin with the raw amino-acid sequence, 1475 residues long: Protein Shroom4 (1475 aa).

One can recognise a PDZ domain in the interval tyrosine 10–asparagine 92. Disordered stretches follow at residues glutamate 151–leucine 175 and cysteine 202–serine 321. The span at threonine 249–serine 258 shows a compositional bias: polar residues. Basic and acidic residues predominate over residues glutamate 294 to glycine 312. Serine 412 carries the phosphoserine modification. Disordered stretches follow at residues serine 432–threonine 523, histidine 542–arginine 577, asparagine 610–aspartate 644, and serine 658–serine 688. Over residues glutamine 471–leucine 485 the composition is skewed to basic and acidic residues. Over residues serine 513–threonine 523 the composition is skewed to polar residues. Basic and acidic residues predominate over residues histidine 542–glycine 557. Residues arginine 558 to arginine 568 are compositionally biased toward gly residues. Composition is skewed to low complexity over residues proline 624–serine 635 and serine 658–serine 667. The residue at position 722 (serine 722) is a Phosphoserine. Composition is skewed to polar residues over residues alanine 727 to proline 738 and lysine 775 to lysine 791. Disordered stretches follow at residues alanine 727–glutamine 753 and glutamate 772–lysine 791. Serine 1010 is modified (phosphoserine). 2 disordered regions span residues serine 1022–proline 1041 and serine 1055–glutamine 1185. Pro residues predominate over residues phenylalanine 1090–asparagine 1099. The segment covering glutamine 1110–glutamine 1125 has biased composition (low complexity). Residues glutamate 1128–leucine 1145 show a composition bias toward acidic residues. Residues tyrosine 1149–serine 1168 are compositionally biased toward polar residues. The ASD2 domain occupies phenylalanine 1190 to histidine 1469. Residues serine 1380–leucine 1470 are a coiled coil.

This sequence belongs to the shroom family. Interacts directly with F-actin. In terms of tissue distribution, detected in most adult tissues examined. Expressed in brain, lung, heart, liver, kidney, muscle and ovary. Expressed throughout the brain, with high expression in the brain stem and cerebellum and weaker expression in the hypothalamus, the hippocampus and the olfactory bulb. Expressed in wide range of cell types during development, including vascular endothelium and the polarized epithelium of the neural tube and kidney.

Its subcellular location is the cytoplasm. The protein localises to the cytoskeleton. Probable regulator of cytoskeletal architecture that plays an important role in development. May regulate cellular and cytoskeletal architecture by modulating the spatial distribution of myosin II. This Mus musculus (Mouse) protein is Protein Shroom4 (Shroom4).